The chain runs to 173 residues: Putative phosphoesterase GWCH70_0799 (173 aa).

Residue His34 is the Proton donor of the active site. Short sequence motifs (HXTX) lie at residues 34 to 37 and 115 to 118; these read HLTL and HITI. His115 functions as the Proton acceptor in the catalytic mechanism.

The protein belongs to the 2H phosphoesterase superfamily. YjcG family.

In Geobacillus sp. (strain WCH70), this protein is Putative phosphoesterase GWCH70_0799.